The chain runs to 360 residues: Phospho-N-acetylmuramoyl-pentapeptide-transferase (360 aa).

10 consecutive transmembrane segments (helical) span residues 25–45 (RGIL…PWMI), 73–93 (TMGG…WADL), 97–117 (YVWV…VDDY), 142–162 (IGAA…TLIV), 167–187 (SVEI…IVGS), 199–219 (GLAI…CYLS), 236–256 (AGEL…FLWF), 263–283 (VFMG…IAVI), 288–308 (IVLF…MIQV), and 338–358 (VIVR…ATLK).

This sequence belongs to the glycosyltransferase 4 family. MraY subfamily. Mg(2+) serves as cofactor.

It localises to the cell inner membrane. The catalysed reaction is UDP-N-acetyl-alpha-D-muramoyl-L-alanyl-gamma-D-glutamyl-meso-2,6-diaminopimeloyl-D-alanyl-D-alanine + di-trans,octa-cis-undecaprenyl phosphate = di-trans,octa-cis-undecaprenyl diphospho-N-acetyl-alpha-D-muramoyl-L-alanyl-D-glutamyl-meso-2,6-diaminopimeloyl-D-alanyl-D-alanine + UMP. Its pathway is cell wall biogenesis; peptidoglycan biosynthesis. Functionally, catalyzes the initial step of the lipid cycle reactions in the biosynthesis of the cell wall peptidoglycan: transfers peptidoglycan precursor phospho-MurNAc-pentapeptide from UDP-MurNAc-pentapeptide onto the lipid carrier undecaprenyl phosphate, yielding undecaprenyl-pyrophosphoryl-MurNAc-pentapeptide, known as lipid I. In Pseudomonas aeruginosa (strain LESB58), this protein is Phospho-N-acetylmuramoyl-pentapeptide-transferase.